The chain runs to 164 residues: Putative ankyrin repeat protein RBE_0585 (164 aa).

2 ANK repeats span residues 42 to 107 (NQDT…VAIL) and 126 to 149 (DKDT…MLDY).

In Rickettsia bellii (strain RML369-C), this protein is Putative ankyrin repeat protein RBE_0585.